The primary structure comprises 274 residues: NH(3)-dependent NAD(+) synthetase (274 aa).

46–53 is a binding site for ATP; that stretch reads GISGGQDS. A Mg(2+)-binding site is contributed by Asp52. Deamido-NAD(+) is bound at residue Arg140. Thr160 contacts ATP. Position 165 (Glu165) interacts with Mg(2+). Deamido-NAD(+) contacts are provided by Lys173 and Asp180. ATP contacts are provided by Lys189 and Thr211. Deamido-NAD(+) is bound at residue 260–261; the sequence is HK.

Belongs to the NAD synthetase family. In terms of assembly, homodimer.

The enzyme catalyses deamido-NAD(+) + NH4(+) + ATP = AMP + diphosphate + NAD(+) + H(+). It functions in the pathway cofactor biosynthesis; NAD(+) biosynthesis; NAD(+) from deamido-NAD(+) (ammonia route): step 1/1. Catalyzes the ATP-dependent amidation of deamido-NAD to form NAD. Uses ammonia as a nitrogen source. The sequence is that of NH(3)-dependent NAD(+) synthetase from Streptococcus suis (strain 05ZYH33).